Consider the following 602-residue polypeptide: Pro-neuregulin-1, membrane-bound isoform (602 aa).

At 1–206 (MWATSEGPLQ…MEAEELYQKR (206 aa)) the chain is on the extracellular side. N-linked (GlcNAc...) asparagine glycosylation occurs at Asn-21. The Ig-like C2-type domain maps to 29–123 (PKLKEMKNQE…DSTKASVIIT (95 aa)). A disulfide bridge links Cys-49 with Cys-105. Asn-113 and Asn-126 each carry an N-linked (GlcNAc...) asparagine glycan. The EGF-like domain maps to 137 to 181 (HLTKCDIKQKAFCVNGGECYMVKDLPNPPRYLCRCPNEFTGDRCQ). 3 disulfide bridges follow: Cys-141-Cys-155, Cys-149-Cys-169, and Cys-171-Cys-180. A helical transmembrane segment spans residues 207-229 (VLTITGICIALLVVGIMCVVAYC). Over 230–602 (KTKKQRKKLH…VIANQDPIAV (373 aa)) the chain is Cytoplasmic. 4 disordered regions span residues 293-366 (ETSF…EGNS), 391-421 (MTTPARMSPVDFHTPTSPKSPPSEMSPPVSS), 460-479 (FNSFHNNPTHESNSLPPSPL), and 486-553 (EYET…FLSI). A compositionally biased stretch (low complexity) spans 294–314 (TSFSTSHYTSTTHHSMTVTQT). The segment covering 315 to 324 (PSHSWSNGHT) has biased composition (polar residues). Positions 325–341 (ESILSESHSVLVSSSVE) are enriched in low complexity. Residues 460–474 (FNSFHNNPTHESNSL) show a composition bias toward polar residues. Basic residues predominate over residues 504–514 (TNSRRVKRTKP). The segment covering 527–536 (DTSSQSTSSE) has biased composition (low complexity).

It belongs to the neuregulin family. Proteolytic cleavage close to the plasma membrane on the external face leads to the release of the soluble growth factor form. In terms of processing, extensive glycosylation precedes the proteolytic cleavage.

The protein localises to the cell membrane. It localises to the secreted. Functionally, direct ligand for the ERBB tyrosine kinase receptors. The multiple isoforms perform diverse functions: cysteine-rich domain containing isoforms (isoform 2-isoform 4) probably regulate the expression of nicotinic acetylcholine receptors at developing interneuronal synapses. Isoform Ig-NRG is required for the initial induction and/or maintenance of the mature levels of acetylcholine receptors at neuromuscular synapses. Binds to ERBB3 and integrins to form a complex which is essential for NRG1-ERBB signaling. In Gallus gallus (Chicken), this protein is Pro-neuregulin-1, membrane-bound isoform (NRG1).